We begin with the raw amino-acid sequence, 354 residues long: Rhodopsin (354 aa).

Residues 1–36 lie on the Extracellular side of the membrane; sequence MNGTEGENFYIPMSNKTGVVRSPFDYPQYYLAEPWK. 2 N-linked (GlcNAc...) asparagine glycosylation sites follow: Asn2 and Asn15. The chain crosses the membrane as a helical span at residues 37–61; sequence FSVLAAYMFFLIIAGFPVNFLTLYV. At 62-73 the chain is on the cytoplasmic side; it reads TIQHKKLRQPLN. Residues 74–96 form a helical membrane-spanning segment; sequence YILLNLAVADLFMIFGGFPSTMI. Residues 97–110 are Extracellular-facing; sequence TSMNGYFVFGPSGC. A disulfide bridge links Cys110 with Cys187. The helical transmembrane segment at 111-133 threads the bilayer; the sequence is NFEGFFATLGGEIGLWSLVVLAI. The 'Ionic lock' involved in activated form stabilization motif lies at 134–136; that stretch reads ERY. At 134 to 152 the chain is on the cytoplasmic side; the sequence is ERYVVVCKPMSNFRFGSQH. A helical transmembrane segment spans residues 153-173; it reads AFMGVGLTWIMAMACAFPPLV. The Extracellular portion of the chain corresponds to 174-202; the sequence is GWSRYIPEGMQCSCGIDYYTLKPEVNNES. A glycan (N-linked (GlcNAc...) asparagine) is linked at Asn200. Residues 203–224 form a helical membrane-spanning segment; that stretch reads FVIYMFVVHFSIPLTIIFFCYG. Topologically, residues 225–252 are cytoplasmic; that stretch reads RLVCTVKEAAAQQQESETTQRAEREVTR. A helical membrane pass occupies residues 253–274; the sequence is MVIIMVIAFLICWLPYASVAFF. Over 275-286 the chain is Extracellular; sequence IFCNQGSEFGPI. Residues 287-308 form a helical membrane-spanning segment; the sequence is FMTIPAFFAKAASLYNPLIYIL. Lys296 is modified (N6-(retinylidene)lysine). The Cytoplasmic segment spans residues 309 to 354; the sequence is MNKQFRNCMITTICCGKNPFEEEESTSASASKTEASSVSSSQVAPA. 2 S-palmitoyl cysteine lipidation sites follow: Cys322 and Cys323. Residues 333 to 354 form a disordered region; it reads STSASASKTEASSVSSSQVAPA. The span at 334-354 shows a compositional bias: low complexity; the sequence is TSASASKTEASSVSSSQVAPA.

This sequence belongs to the G-protein coupled receptor 1 family. Opsin subfamily. Phosphorylated on some or all of the serine and threonine residues present in the C-terminal region. Post-translationally, contains one covalently linked retinal chromophore.

The protein localises to the membrane. It localises to the cell projection. Its subcellular location is the cilium. The protein resides in the photoreceptor outer segment. Its function is as follows. Photoreceptor required for image-forming vision at low light intensity. While most salt water fish species use retinal as chromophore, most freshwater fish use 3-dehydroretinal, or a mixture of retinal and 3-dehydroretinal. Light-induced isomerization of 11-cis to all-trans retinal triggers a conformational change that activates signaling via G-proteins. Subsequent receptor phosphorylation mediates displacement of the bound G-protein alpha subunit by arrestin and terminates signaling. The sequence is that of Rhodopsin (rho) from Scyliorhinus canicula (Small-spotted catshark).